Consider the following 159-residue polypeptide: Small ribosomal subunit protein bS6 (159 aa).

Residues 93 to 151 are compositionally biased toward basic and acidic residues; that stretch reads VDEHEEGPSAMMRKADRDRERDDRGPREGGFRGDREGRGDREGGGFRGDRGPRRPREDA. Positions 93–159 are disordered; the sequence is VDEHEEGPSA…DADTAAASEE (67 aa).

The protein belongs to the bacterial ribosomal protein bS6 family.

Its function is as follows. Binds together with bS18 to 16S ribosomal RNA. The polypeptide is Small ribosomal subunit protein bS6 (Rhodopseudomonas palustris (strain HaA2)).